Reading from the N-terminus, the 1038-residue chain is Isoleucine--tRNA ligase (1038 aa).

The short motif at 48–58 (PTANGKPHVGH) is the 'HIGH' region element. Residues 590–594 (KMSKS) carry the 'KMSKS' region motif. Residue Lys593 participates in ATP binding.

Belongs to the class-I aminoacyl-tRNA synthetase family. IleS type 2 subfamily. Monomer. Zn(2+) serves as cofactor.

Its subcellular location is the cytoplasm. The catalysed reaction is tRNA(Ile) + L-isoleucine + ATP = L-isoleucyl-tRNA(Ile) + AMP + diphosphate. Its function is as follows. Catalyzes the attachment of isoleucine to tRNA(Ile). As IleRS can inadvertently accommodate and process structurally similar amino acids such as valine, to avoid such errors it has two additional distinct tRNA(Ile)-dependent editing activities. One activity is designated as 'pretransfer' editing and involves the hydrolysis of activated Val-AMP. The other activity is designated 'posttransfer' editing and involves deacylation of mischarged Val-tRNA(Ile). In Clostridium novyi (strain NT), this protein is Isoleucine--tRNA ligase.